The chain runs to 321 residues: MVYLLAIIALLITFILVPVLIPTLKRMKFGQSIREEGPQSHMKKTGTPTMGGLTFLISIIITSILAIIFIDNSNPIILLLFVTIGFGLIGFIDDYIIVVKKNNQGLTSKQKFLAQIAIAVIFFILSQVFNLTDFSTGIHIPFINFEIPLSIAYVIFIVFWQVGFSNAVNLTDGLDGLATGLSIIGFVMYAIMAYFQGATSIGLFCIIMIFALLGFLPFNLNPAKVFMGDTGSLALGGIFATISIMLNQELSLLFIGFVFVAETLSVMIQVTSFKLTGKRIFKMSPLHHHFELVGWNETKVVTVFWTVGLITGLIGLWIGVS.

10 consecutive transmembrane segments (helical) span residues 1–21 (MVYLLAIIALLITFILVPVLI), 50–70 (MGGLTFLISIIITSILAIIFI), 76–96 (IILLLFVTIGFGLIGFIDDYI), 112–132 (FLAQIAIAVIFFILSQVFNLT), 140–160 (IPFINFEIPLSIAYVIFIVFW), 173–193 (GLDGLATGLSIIGFVMYAIMA), 198–218 (ATSIGLFCIIMIFALLGFLPF), 225–245 (VFMGDTGSLALGGIFATISIM), 250–270 (LSLLFIGFVFVAETLSVMIQV), and 300–320 (VVTVFWTVGLITGLIGLWIGV).

It belongs to the glycosyltransferase 4 family. MraY subfamily. Requires Mg(2+) as cofactor.

The protein localises to the cell membrane. The enzyme catalyses UDP-N-acetyl-alpha-D-muramoyl-L-alanyl-gamma-D-glutamyl-L-lysyl-D-alanyl-D-alanine + di-trans,octa-cis-undecaprenyl phosphate = Mur2Ac(oyl-L-Ala-gamma-D-Glu-L-Lys-D-Ala-D-Ala)-di-trans,octa-cis-undecaprenyl diphosphate + UMP. Its pathway is cell wall biogenesis; peptidoglycan biosynthesis. Catalyzes the initial step of the lipid cycle reactions in the biosynthesis of the cell wall peptidoglycan: transfers peptidoglycan precursor phospho-MurNAc-pentapeptide from UDP-MurNAc-pentapeptide onto the lipid carrier undecaprenyl phosphate, yielding undecaprenyl-pyrophosphoryl-MurNAc-pentapeptide, known as lipid I. The protein is Phospho-N-acetylmuramoyl-pentapeptide-transferase of Staphylococcus saprophyticus subsp. saprophyticus (strain ATCC 15305 / DSM 20229 / NCIMB 8711 / NCTC 7292 / S-41).